Reading from the N-terminus, the 520-residue chain is MELIKEIETSRNSSVLLKAIFEGDDAPTLLVKKQSQITEYLKENVAYVYLGKKSEFGYKDAYEFARDLAENCARSYQLDLTTFVTEKLCIKGVVDAFTKGINFSAFQYYNLKTFTKRVNENSLSFYLENISQDVLNVFKKALILVDAQNFARNLGVTPPNELNSEQLAEIIRKDFKKYHNLKVKVLERKQIELLGMDLLLSVNKGSVYEPRVVIIEYKGNPSSQEKTVLVGKGITFDSGGYSLKPPKFMLGMKYDMSGSAIVAAVMKAIAQLKPNKNVSAIMCITDNRINGDASLPDSVYTSMSGKTVEVNNTDAEGRLVLADRLYYGATKLNATRLIDTATLTGTMLTALGQTYSGIYATSCKIWHQFEDAAKIAHEKVWRMPLHEDFNKTNKESLVADLNNYSNNEKSDCNTAAMFLKEFTNNVPYIHCDVAGTADKKGMGLGILVSTFVEFGKSQQRNCESCECDEQKCETKNCNIEESTTKIVKAKKSTAKKATTKKTTTRKTASKTKSTKSKARK.

2 residues coordinate Mn(2+): lysine 232 and aspartate 237. Residue lysine 244 is part of the active site. Mn(2+) is bound by residues aspartate 255, aspartate 314, and glutamate 316. The active site involves arginine 318. Positions 488 to 520 (KAKKSTAKKATTKKTTTRKTASKTKSTKSKARK) are disordered.

Belongs to the peptidase M17 family. It depends on Mn(2+) as a cofactor.

It localises to the cytoplasm. It carries out the reaction Release of an N-terminal amino acid, Xaa-|-Yaa-, in which Xaa is preferably Leu, but may be other amino acids including Pro although not Arg or Lys, and Yaa may be Pro. Amino acid amides and methyl esters are also readily hydrolyzed, but rates on arylamides are exceedingly low.. The enzyme catalyses Release of an N-terminal amino acid, preferentially leucine, but not glutamic or aspartic acids.. In terms of biological role, presumably involved in the processing and regular turnover of intracellular proteins. Catalyzes the removal of unsubstituted N-terminal amino acids from various peptides. The sequence is that of Probable cytosol aminopeptidase (pepA) from Metamycoplasma salivarium (Mycoplasma salivarium).